Reading from the N-terminus, the 345-residue chain is Hydroxymethylglutaryl-CoA synthase (345 aa).

(3S)-3-hydroxy-3-methylglutaryl-CoA is bound at residue Asp28. The active-site Proton donor/acceptor is the Glu80. (3S)-3-hydroxy-3-methylglutaryl-CoA contacts are provided by Cys112 and Thr153. The active-site Acyl-thioester intermediate is Cys112. Arg199 provides a ligand contact to CoA. Residues Thr201 and His234 each coordinate (3S)-3-hydroxy-3-methylglutaryl-CoA. His234 serves as the catalytic Proton donor/acceptor. Lys239 contacts CoA. (3S)-3-hydroxy-3-methylglutaryl-CoA contacts are provided by Arg243, Asn266, and Ser296.

The protein belongs to the thiolase-like superfamily. Archaeal HMG-CoA synthase family. Interacts with acetoacetyl-CoA thiolase that catalyzes the precedent step in the pathway and with a DUF35 protein. The acetoacetyl-CoA thiolase/HMG-CoA synthase complex channels the intermediate via a fused CoA-binding site, which allows for efficient coupling of the endergonic thiolase reaction with the exergonic HMGCS reaction.

It carries out the reaction acetoacetyl-CoA + acetyl-CoA + H2O = (3S)-3-hydroxy-3-methylglutaryl-CoA + CoA + H(+). It functions in the pathway metabolic intermediate biosynthesis; (R)-mevalonate biosynthesis; (R)-mevalonate from acetyl-CoA: step 2/3. Its function is as follows. Catalyzes the condensation of acetyl-CoA with acetoacetyl-CoA to form 3-hydroxy-3-methylglutaryl-CoA (HMG-CoA). Functions in the mevalonate (MVA) pathway leading to isopentenyl diphosphate (IPP), a key precursor for the biosynthesis of isoprenoid compounds that are building blocks of archaeal membrane lipids. The sequence is that of Hydroxymethylglutaryl-CoA synthase from Methanobrevibacter smithii (strain ATCC 35061 / DSM 861 / OCM 144 / PS).